Reading from the N-terminus, the 401-residue chain is Acetate kinase (401 aa).

Asparagine 7 lines the Mg(2+) pocket. ATP is bound at residue lysine 14. Arginine 90 lines the substrate pocket. Aspartate 147 (proton donor/acceptor) is an active-site residue. Residues 207-211, 282-284, and 331-335 contribute to the ATP site; these read HMGNG, DMR, and GIGEN. Position 385 (glutamate 385) interacts with Mg(2+).

It belongs to the acetokinase family. Homodimer. The cofactor is Mg(2+). Requires Mn(2+) as cofactor.

It is found in the cytoplasm. The enzyme catalyses acetate + ATP = acetyl phosphate + ADP. It functions in the pathway metabolic intermediate biosynthesis; acetyl-CoA biosynthesis; acetyl-CoA from acetate: step 1/2. Its function is as follows. Catalyzes the formation of acetyl phosphate from acetate and ATP. Can also catalyze the reverse reaction. The sequence is that of Acetate kinase from Clostridium acetobutylicum (strain ATCC 824 / DSM 792 / JCM 1419 / IAM 19013 / LMG 5710 / NBRC 13948 / NRRL B-527 / VKM B-1787 / 2291 / W).